We begin with the raw amino-acid sequence, 60 residues long: UPF0434 protein Pnap_1922 (60 aa).

Belongs to the UPF0434 family.

This chain is UPF0434 protein Pnap_1922, found in Polaromonas naphthalenivorans (strain CJ2).